The chain runs to 445 residues: Sodium/proton-dependent alanine carrier protein (445 aa).

9 consecutive transmembrane segments (helical) span residues 41–61, 103–123, 129–149, 159–179, 188–208, 249–269, 304–324, 349–369, and 375–395; these read IAYG…IGAA, AAII…SIAD, FGIP…FTIF, AEIV…AIIA, VFGL…GILG, AFSI…MILF, TLFP…FAFT, AFFA…VKTA, and MGDI…LLLF.

This sequence belongs to the alanine or glycine:cation symporter (AGCS) (TC 2.A.25) family. The N-terminus is blocked.

It localises to the cell membrane. Its function is as follows. Mediates the active transport of alanine, driven by either an H(+) or Na(+) gradient. The chain is Sodium/proton-dependent alanine carrier protein from Bacillus sp. (strain PS3).